Reading from the N-terminus, the 250-residue chain is Proteasome subunit alpha type-4 (250 aa).

Belongs to the peptidase T1A family. In terms of assembly, the 26S proteasome consists of a 20S proteasome core and two 19S regulatory subunits. The 20S proteasome core is composed of 28 subunits that are arranged in four stacked rings, resulting in a barrel-shaped structure. The two end rings are each formed by seven alpha subunits, and the two central rings are each formed by seven beta subunits. The catalytic chamber with the active sites is on the inside of the barrel.

It localises to the cytoplasm. The protein resides in the nucleus. In terms of biological role, the proteasome is a multicatalytic proteinase complex which is characterized by its ability to cleave peptides with Arg, Phe, Tyr, Leu, and Glu adjacent to the leaving group at neutral or slightly basic pH. The proteasome has an ATP-dependent proteolytic activity. This is Proteasome subunit alpha type-4 (psmA4) from Dictyostelium discoideum (Social amoeba).